The chain runs to 309 residues: tRNA dimethylallyltransferase (309 aa).

Residue 9 to 16 (GPTAIGKT) participates in ATP binding. A substrate-binding site is contributed by 11–16 (TAIGKT). Interaction with substrate tRNA stretches follow at residues 34 to 37 (DSRQ) and 164 to 168 (QRMMR).

Belongs to the IPP transferase family. As to quaternary structure, monomer. The cofactor is Mg(2+).

The catalysed reaction is adenosine(37) in tRNA + dimethylallyl diphosphate = N(6)-dimethylallyladenosine(37) in tRNA + diphosphate. Its function is as follows. Catalyzes the transfer of a dimethylallyl group onto the adenine at position 37 in tRNAs that read codons beginning with uridine, leading to the formation of N6-(dimethylallyl)adenosine (i(6)A). In Flavobacterium johnsoniae (strain ATCC 17061 / DSM 2064 / JCM 8514 / BCRC 14874 / CCUG 350202 / NBRC 14942 / NCIMB 11054 / UW101) (Cytophaga johnsonae), this protein is tRNA dimethylallyltransferase.